A 164-amino-acid chain; its full sequence is UPF0478 protein SSP1024 (164 aa).

The chain crosses the membrane as a helical span at residues I7–L27. The tract at residues R136–K164 is disordered. Over residues N143 to K164 the composition is skewed to polar residues.

The protein belongs to the UPF0478 family.

It is found in the cell membrane. The chain is UPF0478 protein SSP1024 from Staphylococcus saprophyticus subsp. saprophyticus (strain ATCC 15305 / DSM 20229 / NCIMB 8711 / NCTC 7292 / S-41).